Reading from the N-terminus, the 447-residue chain is uncharacterized protein (447 aa).

Transmembrane regions (helical) follow at residues 17–37 (IMMMALGGAIGAGLFKGSSSA), 40–60 (VAGPSVIIAYLLGGIILLFIM), 95–115 (IYWKMWVLNIAAEAVVAAIFI), 118–138 (WLPGCPIWVLALGISLIVTIV), 154–174 (AMIKITVIIIFIILGLLLLFV), 200–220 (GLITAMLVVIYSYGGTEIIGV), 243–263 (IVAFYLLPFFIIVSLIPWNQV), 289–311 (AVILLAIISSMNSGLYGSSRILY), 333–353 (MFAILMCTSSLYIGVLISLFA), 361–381 (LMGSLGYTVLFIWLIIGFAHL), 393–415 (YYVKWFPYTTWFAIVALLAILIG), and 419–441 (TTSIVITGITAAIYLLITVAYLV).

It belongs to the amino acid-polyamine-organocation (APC) superfamily.

It localises to the cell membrane. Its function is as follows. May participate in leucine metabolism. May transport leucine or a compound related to leucine metabolism. This is an uncharacterized protein from Bacillus subtilis (strain 168).